Here is a 1114-residue protein sequence, read N- to C-terminus: Probable guanine nucleotide exchange factor MCF2L2 (1114 aa).

One can recognise a CRAL-TRIO domain in the interval 11–193 (PQELTRRLAT…ELGGTLEYRH (183 aa)). The Spectrin repeat unit spans residues 323–428 (QHFEHDFCKA…KWDILGKSLE (106 aa)). A disordered region spans residues 530–614 (QTRPVQPVAP…NPELEQQARL (85 aa)). The segment covering 546–559 (KWVSSKTSQPSTSV) has biased composition (polar residues). A compositionally biased stretch (basic and acidic residues) spans 577 to 606 (LNSRGKEDDETKFEVKSEEIFESHHERGNP). The DH domain maps to 619–822 (PRRRIIRDLL…EDLIKSCELA (204 aa)). The PH domain maps to 834–954 (DIGKLGKLLL…WFSEISKLLM (121 aa)). Residues 962 to 975 (DQGNPQFEMSTSKG) show a composition bias toward polar residues. A disordered region spans residues 962 to 1114 (DQGNPQFEMS…LRPRTSAQES (153 aa)). The segment covering 986–997 (NMERATTSKEDP) has biased composition (basic and acidic residues). The span at 1017-1028 (TFEDCEGAEDME) shows a compositional bias: acidic residues. Composition is skewed to basic and acidic residues over residues 1043–1067 (DDSH…GEKE) and 1074–1084 (TATRSTEEERA).

The protein belongs to the MCF2 family. Significantly expressed in brain and modestly in pancreas, brain and testis.

In terms of biological role, probably functions as a guanine nucleotide exchange factor. In Homo sapiens (Human), this protein is Probable guanine nucleotide exchange factor MCF2L2 (MCF2L2).